Reading from the N-terminus, the 441-residue chain is G-protein coupled receptor family C group 5 member C (441 aa).

Residues 1–23 (MAIHKALVMCLGLPLFLFPGAWA) form the signal peptide. Over 24–50 (QGHVPPGCSQGLNPLYYNLCDRSGAWG) the chain is Extracellular. Residues 51-71 (IVLEAVAGAGIVTTFVLTIIL) traverse the membrane as a helical segment. Over 72–85 (VASLPFVQDTKKRS) the chain is Cytoplasmic. The helical transmembrane segment at 86 to 106 (LLGTQVFFLLGTLGLFCLVFA) threads the bilayer. At 107-120 (CVVKPDFSTCASRR) the chain is on the extracellular side. A helical membrane pass occupies residues 121–141 (FLFGVLFAICFSCLAAHVFAL). The Cytoplasmic portion of the chain corresponds to 142 to 155 (NFLARKNHGPRGWV). Residues 156-176 (IFTVALLLTLVEVIINTEWLI) traverse the membrane as a helical segment. At 177 to 208 (ITLVRGSGEGGPQGNSSAGWAVASPCAIANMD) the chain is on the extracellular side. Residue asparagine 191 is glycosylated (N-linked (GlcNAc...) asparagine). The helical transmembrane segment at 209–229 (FVMALIYVMLLLLGAFLGAWP) threads the bilayer. The Cytoplasmic portion of the chain corresponds to 230 to 241 (ALCGRYKRWRKH). The helical transmembrane segment at 242-262 (GVFVLLTTATSVAIWVVWIVM) threads the bilayer. Residues 263–279 (YTYGNKQHNSPTWDDPT) are Extracellular-facing. The helical transmembrane segment at 280–300 (LAIALAANAWAFVLFYVIPEV) threads the bilayer. The Cytoplasmic segment spans residues 301 to 441 (SQVTKSSPEQ…QVFRNPYVWD (141 aa)). A phosphoserine mark is found at serine 344, serine 383, serine 403, and serine 406. The segment at 412–441 (DMYSAQSHQAATPPKDGKNSQVFRNPYVWD) is disordered. Tyrosine 414 carries the post-translational modification Phosphotyrosine. Phosphothreonine is present on threonine 423.

It belongs to the G-protein coupled receptor 3 family. Expression is highest in the periphery, particularly in the stomach, but also in the kidney, liver, pancreas, and prostate. In brain, levels of expression are generally lower than in the periphery, with the exception of cerebellum, spinal cord, and dorsal root ganglia (DRG).

The protein resides in the cell membrane. It localises to the cytoplasmic vesicle membrane. This retinoic acid-inducible G-protein coupled receptor provide evidence for a possible interaction between retinoid and G-protein signaling pathways. The sequence is that of G-protein coupled receptor family C group 5 member C (GPRC5C) from Homo sapiens (Human).